A 465-amino-acid chain; its full sequence is UDP-N-acetylmuramate--L-alanine ligase (465 aa).

G112–T118 lines the ATP pocket.

The protein belongs to the MurCDEF family.

It is found in the cytoplasm. The enzyme catalyses UDP-N-acetyl-alpha-D-muramate + L-alanine + ATP = UDP-N-acetyl-alpha-D-muramoyl-L-alanine + ADP + phosphate + H(+). It participates in cell wall biogenesis; peptidoglycan biosynthesis. Its function is as follows. Cell wall formation. In Burkholderia thailandensis (strain ATCC 700388 / DSM 13276 / CCUG 48851 / CIP 106301 / E264), this protein is UDP-N-acetylmuramate--L-alanine ligase.